The following is a 1120-amino-acid chain: Transcriptional repressor NF-X1 (1120 aa).

The interaction with PABPC1 and PABC4 stretch occupies residues 9–26; sequence GTFKFNTDAAEFIPQEKK. The segment at 22–295 is disordered; the sequence is PQEKKNSGLN…LNERPAKSTC (274 aa). Phosphoserine is present on residues Ser50, Ser82, and Ser95. The segment covering 73–106 has biased composition (polar residues); the sequence is YHPSGSKPKSQQTSFQSSPCNKSPKSHGLQNQPW. Basic residues predominate over residues 111-120; the sequence is NEKHHIRVKK. The span at 124 to 141 shows a compositional bias: polar residues; that stretch reads LAEQTSDTAGLESSTRSE. Residues Ser129 and Ser150 each carry the phosphoserine modification. Composition is skewed to basic and acidic residues over residues 142–159, 188–202, 222–254, and 282–291; these read SGTD…KEVV, LKCE…KPED, SSRK…EGAR, and PKDDLNERPA. Ser326 is modified (phosphoserine). The segment at 358-409 adopts an RING-type; atypical zinc-finger fold; the sequence is CMVCCELVRVTAPVWSCQSCYHVFHLNCIKKWARSPASQADGQSGWRCPACQ. NF-X1-type zinc fingers lie at residues 453-471, 506-525, 567-586, 632-655, 694-713, 721-740, 832-854, and 863-884; these read CPHS…PCPA, CGQH…PCQI, CGNH…QCPR, CGSL…PCSR, CGRH…KCPL, CGLH…TCWQ, CGMH…PCKQ, and CGHP…ACKA. Residues 994–1062 enclose the R3H domain; the sequence is LKFVSDVEKE…KRNVVVTAIR (69 aa). Residues 1081-1109 form a disordered region; it reads QARPPPPIPHHRHQSDKNPGSSNLQKITK. Over residues 1097 to 1106 the composition is skewed to polar residues; sequence KNPGSSNLQK.

It belongs to the NFX1 family. In terms of assembly, isoform 1 interacts with PABPC1 and PABPC4. (Microbial infection) Isoform 1 and isoform 3 interact with human papillomavirus (HPV) type-16 E6 oncoprotein. Post-translationally, isoform 3 is polyubiquitinated in the presence of HPV16 E6 protein; which leads to proteasomal degradation. Isoform 1 is not polyubiquitinated.

It localises to the nucleus. In terms of biological role, binds to the X-box motif of MHC class II genes and represses their expression. May play an important role in regulating the duration of an inflammatory response by limiting the period in which MHC class II molecules are induced by interferon-gamma. Isoform 3 binds to the X-box motif of TERT promoter and represses its expression. Together with PABPC1 or PABPC4, isoform 1 acts as a coactivator for TERT expression. Mediates E2-dependent ubiquitination. This Homo sapiens (Human) protein is Transcriptional repressor NF-X1 (NFX1).